A 418-amino-acid chain; its full sequence is Phosphoglycerate kinase (418 aa).

Residues V23, D24, F25, N26, Q39, R40, S63, H64, G66, R67, L122, R123, H170, and R171 each contribute to the (2R)-3-phosphoglycerate site. Residue G214 coordinates ADP. G214 serves as a coordination point for CDP. AMP is bound by residues A215 and K216. Position 215 (A215) interacts with ATP. A215 lines the Mg(2+) pocket. D219 serves as a coordination point for CDP. D219 is a Mg(2+) binding site. K220 contacts AMP. An ATP-binding site is contributed by K220. G238 lines the ADP pocket. A CDP-binding site is contributed by G238. Positions 239 and 313 each coordinate AMP. ATP is bound by residues G239 and G313. G338, A340, and F343 together coordinate CDP. F343 contacts ADP. E344 serves as a coordination point for AMP. ATP is bound by residues E344, D375, and T376. Residue D375 participates in Mg(2+) binding.

This sequence belongs to the phosphoglycerate kinase family. Monomer. Mg(2+) is required as a cofactor.

It localises to the cytoplasm. The protein resides in the mitochondrion. The catalysed reaction is (2R)-3-phosphoglycerate + ATP = (2R)-3-phospho-glyceroyl phosphate + ADP. It functions in the pathway carbohydrate degradation; glycolysis; pyruvate from D-glyceraldehyde 3-phosphate: step 2/5. In terms of biological role, catalyzes one of the two ATP producing reactions in the glycolytic pathway via the reversible conversion of 1,3-diphosphoglycerate to 3-phosphoglycerate. Both L- and D- forms of purine and pyrimidine nucleotides can be used as substrates, but the activity is much lower on pyrimidines. Negatively regulates the biosynthesis of acetyl-CoA from pyruvate in the mitochondrion. In Neurospora crassa (strain ATCC 24698 / 74-OR23-1A / CBS 708.71 / DSM 1257 / FGSC 987), this protein is Phosphoglycerate kinase (pgk-1).